Reading from the N-terminus, the 537-residue chain is Glutamyl-tRNA reductase, chloroplastic (537 aa).

The transit peptide at 1 to 48 directs the protein to the chloroplast; that stretch reads MMASTTSATAAGGAFAAAKTRAGSSAAGGGACARVAAGGRRRSGVVVR. Substrate-binding positions include 134–137, serine 194, 199–201, and glutamine 205; these read TCNR and EGQ. Residue cysteine 135 is the Nucleophile of the active site. 276 to 281 is a binding site for NADP(+); it reads GAGKMG.

This sequence belongs to the glutamyl-tRNA reductase family.

The protein localises to the plastid. The protein resides in the chloroplast. It carries out the reaction (S)-4-amino-5-oxopentanoate + tRNA(Glu) + NADP(+) = L-glutamyl-tRNA(Glu) + NADPH + H(+). It functions in the pathway porphyrin-containing compound metabolism; protoporphyrin-IX biosynthesis; 5-aminolevulinate from L-glutamyl-tRNA(Glu): step 1/2. In terms of biological role, catalyzes the NADPH-dependent reduction of glutamyl-tRNA(Glu) to glutamate 1-semialdehyde (GSA). In Oryza sativa subsp. japonica (Rice), this protein is Glutamyl-tRNA reductase, chloroplastic.